Consider the following 219-residue polypeptide: 7-carboxy-7-deazaguanine synthase (219 aa).

Substrate is bound by residues 22–24 (IQG) and Arg-37. The Radical SAM core domain maps to 28–219 (LVGLPSVFIR…PQVHKCFDLK (192 aa)). Residues Cys-41, Cys-45, and Cys-48 each coordinate [4Fe-4S] cluster. Thr-81 provides a ligand contact to substrate. Residues Gly-83 and 130–132 (SPK) each bind S-adenosyl-L-methionine.

This sequence belongs to the radical SAM superfamily. 7-carboxy-7-deazaguanine synthase family. As to quaternary structure, homodimer. [4Fe-4S] cluster is required as a cofactor. Requires S-adenosyl-L-methionine as cofactor. It depends on Mg(2+) as a cofactor.

The enzyme catalyses 6-carboxy-5,6,7,8-tetrahydropterin + H(+) = 7-carboxy-7-deazaguanine + NH4(+). The protein operates within purine metabolism; 7-cyano-7-deazaguanine biosynthesis. In terms of biological role, catalyzes the complex heterocyclic radical-mediated conversion of 6-carboxy-5,6,7,8-tetrahydropterin (CPH4) to 7-carboxy-7-deazaguanine (CDG), a step common to the biosynthetic pathways of all 7-deazapurine-containing compounds. This Aquifex aeolicus (strain VF5) protein is 7-carboxy-7-deazaguanine synthase.